A 275-amino-acid chain; its full sequence is Putative pyruvate, phosphate dikinase regulatory protein (275 aa).

Position 149 to 156 (149 to 156 (GVSRTSKT)) interacts with ADP.

This sequence belongs to the pyruvate, phosphate/water dikinase regulatory protein family. PDRP subfamily.

The enzyme catalyses N(tele)-phospho-L-histidyl/L-threonyl-[pyruvate, phosphate dikinase] + ADP = N(tele)-phospho-L-histidyl/O-phospho-L-threonyl-[pyruvate, phosphate dikinase] + AMP + H(+). It carries out the reaction N(tele)-phospho-L-histidyl/O-phospho-L-threonyl-[pyruvate, phosphate dikinase] + phosphate + H(+) = N(tele)-phospho-L-histidyl/L-threonyl-[pyruvate, phosphate dikinase] + diphosphate. Its function is as follows. Bifunctional serine/threonine kinase and phosphorylase involved in the regulation of the pyruvate, phosphate dikinase (PPDK) by catalyzing its phosphorylation/dephosphorylation. The polypeptide is Putative pyruvate, phosphate dikinase regulatory protein (Levilactobacillus brevis (strain ATCC 367 / BCRC 12310 / CIP 105137 / JCM 1170 / LMG 11437 / NCIMB 947 / NCTC 947) (Lactobacillus brevis)).